A 491-amino-acid polypeptide reads, in one-letter code: UDP-N-acetylmuramate--L-alanine ligase (491 aa).

126-132 (GTHGKTT) contributes to the ATP binding site.

This sequence belongs to the MurCDEF family.

The protein resides in the cytoplasm. It carries out the reaction UDP-N-acetyl-alpha-D-muramate + L-alanine + ATP = UDP-N-acetyl-alpha-D-muramoyl-L-alanine + ADP + phosphate + H(+). It functions in the pathway cell wall biogenesis; peptidoglycan biosynthesis. In terms of biological role, cell wall formation. This is UDP-N-acetylmuramate--L-alanine ligase from Klebsiella pneumoniae (strain 342).